The following is a 120-amino-acid chain: Immunogenic miracidial antigen 5D (120 aa).

Residues 41-120 form a disordered region; that stretch reads HIDVGDEDYH…PKKYGSGYKH (80 aa). Residues 45 to 66 are compositionally biased toward acidic residues; sequence GDEDYHDGDDDVDYTDDVDDVD.

Belongs to the immunogenic miracidial antigen family.

The polypeptide is Immunogenic miracidial antigen 5D (5D) (Schistosoma japonicum (Blood fluke)).